The primary structure comprises 41 residues: Large ribosomal subunit protein bL36 (41 aa).

It belongs to the bacterial ribosomal protein bL36 family.

In Chelativorans sp. (strain BNC1), this protein is Large ribosomal subunit protein bL36.